Here is a 410-residue protein sequence, read N- to C-terminus: Aspartic proteinase Asp1 (410 aa).

An N-terminal signal peptide occupies residues 1 to 23 (MTARLALLASLLLLLQLVPPSSA). A propeptide spans 24-46 (VVLELHGNVYPIGHFFITMNIGD) (removed in mature form). One can recognise a Peptidase A1 domain in the interval 38-392 (FFITMNIGDP…DSERSLLGWV (355 aa)). Active-site residues include Asp56 and Asp257.

This sequence belongs to the peptidase A1 family.

This Oryza sativa subsp. japonica (Rice) protein is Aspartic proteinase Asp1 (ASP1).